A 405-amino-acid polypeptide reads, in one-letter code: uncharacterized protein (405 aa).

Helical transmembrane passes span 3–23 (IIAK…PTTE), 42–62 (GITQ…ILTL), 73–93 (PIAL…IFAV), 95–115 (IEML…GSVI), 135–155 (SLSP…GYII), 162–182 (YVFV…YKVL), 209–229 (ILWL…GFFI), 248–268 (KLAF…GYLI), 280–300 (GLGF…AFIL), 309–329 (LAIA…NLLI), 346–366 (TAGS…TYLV), and 377–397 (FALL…CIWV).

The protein belongs to the major facilitator superfamily. Bcr/CmlA family.

The protein resides in the cell inner membrane. This is an uncharacterized protein from Rickettsia felis (strain ATCC VR-1525 / URRWXCal2) (Rickettsia azadi).